The sequence spans 216 residues: Cytidylate kinase (216 aa).

7-15 (GPSGTGKST) contributes to the ATP binding site.

The protein belongs to the cytidylate kinase family. Type 1 subfamily.

The protein resides in the cytoplasm. The enzyme catalyses CMP + ATP = CDP + ADP. The catalysed reaction is dCMP + ATP = dCDP + ADP. The chain is Cytidylate kinase from Chlamydia trachomatis serovar L2 (strain ATCC VR-902B / DSM 19102 / 434/Bu).